A 361-amino-acid polypeptide reads, in one-letter code: BBSome complex member bbs-5 (361 aa).

It belongs to the BBS5 family. As to quaternary structure, part of BBSome complex, that contains at least bbs-1, bbs-2, bbs-4, bbs-5, osm-12, bbs-8/ttc-8 and bbs-9. Interacts with bbs-4 (via C-terminus); the interaction is direct.

The protein resides in the cell projection. Its subcellular location is the cilium membrane. It localises to the cytoplasm. It is found in the cytoskeleton. The protein localises to the cilium basal body. The protein resides in the microtubule organizing center. Its subcellular location is the centrosome. It localises to the centriolar satellite. In terms of biological role, component of the BBSome complex. The BBSome complex is thought to function as a coat complex required for sorting of specific membrane proteins to the primary cilia. The BBSome complex is required for ciliogenesis but is dispensable for centriolar satellite function. Required for BBSome complex ciliary localization but not for the proper complex assembly. Required, redundantly with bbs-4, for cilia biogenesis and both the assembly and movement of intraflagellar transport proteins along the ciliary axoneme. Plays a role in the removal of degraded mechanosensory receptors within the cilia. This Caenorhabditis elegans protein is BBSome complex member bbs-5.